Reading from the N-terminus, the 380-residue chain is MGSSCSRSHSLSEAETTKNAKSADIDRRILQETKAEQHIHKLLLLGAGESGKSTIFKQIKLLFQTGFDEAELRSYTSVIHANVYQTIKILYEGAKELSQVESDSSKYVISPDNQEIGEKLSDIDGRLDYPLLNKELVLDVKRLWQDPAIQETYLRGSILQLPDCAQYFMENLDRLAEAGYVPTKEDVLYARVRTNGVVQIQFSPVGENKRGGEVYRLYDVGGQRNERRKWIHLFEGVNAVIFCAAISEYDQMLFEDETKNRMMETKELFDWVLKQRCFEKTSFILFLNKFDIFEKKIQKVPLSVCEWFKDYQPIAPGKQEVEHAYEFVKKKFEELYFQSSKPDRVDRVFKIYRTTALDQKLVKKTFKLIDESMRRSREGT.

The disordered stretch occupies residues 1 to 25 (MGSSCSRSHSLSEAETTKNAKSADI). Residue G2 is the site of N-myristoyl glycine attachment. The S-palmitoyl cysteine moiety is linked to residue C5. Residues 10–25 (SLSEAETTKNAKSADI) show a composition bias toward basic and acidic residues. The 343-residue stretch at 38–380 (HIHKLLLLGA…ESMRRSREGT (343 aa)) folds into the G-alpha domain. The interval 41–54 (KLLLLGAGESGKST) is G1 motif. Residues E49, S50, G51, K52, S53, T54, D163, L188, Y189, T194, G222, N288, K289, D291, and A356 each contribute to the GTP site. Residue S53 coordinates Mg(2+). A G2 motif region spans residues 186 to 194 (DVLYARVRT). Position 194 (T194) interacts with Mg(2+). The G3 motif stretch occupies residues 215–224 (YRLYDVGGQR). The interval 284–291 (ILFLNKFD) is G4 motif. A G5 motif region spans residues 354–359 (TTALDQ).

Belongs to the G-alpha family. As to quaternary structure, g proteins are composed of 3 units; alpha, beta and gamma. The alpha chain contains the guanine nucleotide binding site. Interacts with COLD1. It depends on Mg(2+) as a cofactor.

Its subcellular location is the cell membrane. In terms of biological role, guanine nucleotide-binding proteins (G proteins) are involved as modulators or transducers in various transmembrane signaling systems. May function in a signal transduction pathway required for normal growth and development of internodes, leaves, panicles and seeds. Involved in gibberellin signal transduction. Involved in R gene-mediated disease resistance. Functions upstream of the small GTPase RAC1 in the early steps of signaling. Involved in brassinosteroid response. May not be a signaling molecule in BRI1-mediated perception or transduction. This chain is Guanine nucleotide-binding protein alpha-1 subunit (GPA1), found in Oryza sativa subsp. indica (Rice).